The following is a 355-amino-acid chain: DNA polymerase IV (355 aa).

Residues I14–G198 enclose the UmuC domain. The Mg(2+) site is built by D18 and D116. The active site involves E117.

It belongs to the DNA polymerase type-Y family. As to quaternary structure, monomer. Mg(2+) serves as cofactor.

It is found in the cytoplasm. It carries out the reaction DNA(n) + a 2'-deoxyribonucleoside 5'-triphosphate = DNA(n+1) + diphosphate. In terms of biological role, poorly processive, error-prone DNA polymerase involved in untargeted mutagenesis. Copies undamaged DNA at stalled replication forks, which arise in vivo from mismatched or misaligned primer ends. These misaligned primers can be extended by PolIV. Exhibits no 3'-5' exonuclease (proofreading) activity. May be involved in translesional synthesis, in conjunction with the beta clamp from PolIII. The sequence is that of DNA polymerase IV from Streptococcus suis (strain 98HAH33).